A 32-amino-acid chain; its full sequence is SGNVAEAPKHYHCSYEDADIVMREWYHVWGSG.

Belongs to the globin family. Giant hemoglobin is composed of four heme-containing chains (AI to AIV), and two linker chains (AV and AVI).

This Lamellibrachia sp. (Deep-sea giant tube worm) protein is Giant hemoglobin AIV chain.